Here is a 152-residue protein sequence, read N- to C-terminus: Nucleoside diphosphate kinase (152 aa).

Positions 11, 59, 87, 93, 104, and 114 each coordinate ATP. Catalysis depends on His-117, which acts as the Pros-phosphohistidine intermediate.

The protein belongs to the NDK family. In terms of assembly, homotetramer. Mg(2+) is required as a cofactor.

Its subcellular location is the cytoplasm. The enzyme catalyses a 2'-deoxyribonucleoside 5'-diphosphate + ATP = a 2'-deoxyribonucleoside 5'-triphosphate + ADP. It carries out the reaction a ribonucleoside 5'-diphosphate + ATP = a ribonucleoside 5'-triphosphate + ADP. Its function is as follows. Major role in the synthesis of nucleoside triphosphates other than ATP. The ATP gamma phosphate is transferred to the NDP beta phosphate via a ping-pong mechanism, using a phosphorylated active-site intermediate. This is Nucleoside diphosphate kinase from Prochlorococcus marinus (strain MIT 9515).